Reading from the N-terminus, the 364-residue chain is Dual-specificity RNA methyltransferase RlmN (364 aa).

Glu91 (proton acceptor) is an active-site residue. In terms of domain architecture, Radical SAM core spans Glu97–Asp333. Cys104 and Cys338 are oxidised to a cystine. Positions 111, 115, and 118 each coordinate [4Fe-4S] cluster. S-adenosyl-L-methionine contacts are provided by residues Gly164–Glu165, Ser196, Ser218–His220, and Asn295. Cys338 functions as the S-methylcysteine intermediate in the catalytic mechanism.

The protein belongs to the radical SAM superfamily. RlmN family. [4Fe-4S] cluster is required as a cofactor.

It localises to the cytoplasm. It catalyses the reaction adenosine(2503) in 23S rRNA + 2 reduced [2Fe-2S]-[ferredoxin] + 2 S-adenosyl-L-methionine = 2-methyladenosine(2503) in 23S rRNA + 5'-deoxyadenosine + L-methionine + 2 oxidized [2Fe-2S]-[ferredoxin] + S-adenosyl-L-homocysteine. It carries out the reaction adenosine(37) in tRNA + 2 reduced [2Fe-2S]-[ferredoxin] + 2 S-adenosyl-L-methionine = 2-methyladenosine(37) in tRNA + 5'-deoxyadenosine + L-methionine + 2 oxidized [2Fe-2S]-[ferredoxin] + S-adenosyl-L-homocysteine. Its function is as follows. Specifically methylates position 2 of adenine 2503 in 23S rRNA and position 2 of adenine 37 in tRNAs. m2A2503 modification seems to play a crucial role in the proofreading step occurring at the peptidyl transferase center and thus would serve to optimize ribosomal fidelity. The polypeptide is Dual-specificity RNA methyltransferase RlmN (Neisseria gonorrhoeae (strain ATCC 700825 / FA 1090)).